A 327-amino-acid chain; its full sequence is (-)-delta-cadinene synthase (327 aa).

5 residues coordinate Mg(2+): D84, D85, N222, T226, and E230.

This sequence belongs to the terpene synthase family.

The catalysed reaction is (2E,6E)-farnesyl diphosphate = (-)-delta-cadinene + diphosphate. In terms of biological role, catalyzes the conversion of (2E,6E)-farnesyl diphosphate into (-)-delta-cadinene. Cyclization mechanism involves an intermediate nerolidyl diphosphate leading to a helminthogermacradienyl cation. The sequence is that of (-)-delta-cadinene synthase from Streptomyces clavuligerus.